The primary structure comprises 108 residues: Translation initiation factor 1A (108 aa).

Positions 11-85 constitute an S1-like domain; the sequence is PSRDVPRPEE…NRCDILYKYG (75 aa).

Belongs to the eIF-1A family.

Seems to be required for maximal rate of protein biosynthesis. Enhances ribosome dissociation into subunits and stabilizes the binding of the initiator Met-tRNA(I) to 40 S ribosomal subunits. The polypeptide is Translation initiation factor 1A (eIF1A) (Saccharolobus solfataricus (strain ATCC 35092 / DSM 1617 / JCM 11322 / P2) (Sulfolobus solfataricus)).